The following is a 323-amino-acid chain: Aldo-keto reductase family 1 member C23-like protein (323 aa).

Residue 20-24 coordinates NADP(+); the sequence is GFGTY. A substrate-binding site is contributed by Lys-31. Asp-50 lines the NADP(+) pocket. The Proton donor role is filled by Tyr-55. A substrate-binding site is contributed by His-117. NADP(+)-binding positions include 166-167, Gln-190, 216-222, and 270-280; these read SN, YGALGTQ, and KSYNEKRIKEN.

Belongs to the aldo/keto reductase family. In terms of assembly, monomer. Detected in endometrium surface epithelium (at protein level). Detected in endometrium.

It is found in the cytoplasm. Its function is as follows. NADP-dependent oxidoreductase involved in steroid metabolism. May act on various hydroxysteroids. The chain is Aldo-keto reductase family 1 member C23-like protein (PGFS) from Equus caballus (Horse).